The chain runs to 323 residues: Mycothiol acetyltransferase (323 aa).

N-acetyltransferase domains follow at residues 21 to 176 and 173 to 323; these read ELLR…VSLR and VSLR…LTKN. 1D-myo-inositol 2-(L-cysteinylamino)-2-deoxy-alpha-D-glucopyranoside is bound at residue Glu44. 98–100 provides a ligand contact to acetyl-CoA; it reads LAV. 1D-myo-inositol 2-(L-cysteinylamino)-2-deoxy-alpha-D-glucopyranoside is bound by residues Glu200, Lys240, and Glu253. Acetyl-CoA is bound by residues 257–259 and 264–270; these read VGV and QGLGLGK. A 1D-myo-inositol 2-(L-cysteinylamino)-2-deoxy-alpha-D-glucopyranoside-binding site is contributed by Tyr291.

This sequence belongs to the acetyltransferase family. MshD subfamily. In terms of assembly, monomer.

The enzyme catalyses 1D-myo-inositol 2-(L-cysteinylamino)-2-deoxy-alpha-D-glucopyranoside + acetyl-CoA = mycothiol + CoA + H(+). Its function is as follows. Catalyzes the transfer of acetyl from acetyl-CoA to desacetylmycothiol (Cys-GlcN-Ins) to form mycothiol. In Paenarthrobacter aurescens (strain TC1), this protein is Mycothiol acetyltransferase.